Here is a 460-residue protein sequence, read N- to C-terminus: DL-alanine permease SerP2 (460 aa).

The next 12 helical transmembrane spans lie at 26-46, 47-67, 98-118, 124-144, 160-180, 209-229, 246-266, 278-298, 344-364, 368-388, 410-430, and 433-453; these read LIAI…KSIH, LTGP…YILL, FIQW…LIAI, FWLP…LLTL, FGMI…ILIF, FFES…IGMT, QIPI…MSIY, FVTI…NFVV, ALLF…IPAI, FVFI…MTLI, HIFI…LFCF, and TIIP…FTFF.

It belongs to the amino acid-polyamine-organocation (APC) superfamily. Amino acid transporter (AAT) (TC 2.A.3.1) family.

The protein resides in the cell membrane. Transports DL-alanine, DL-serine and glycine. The preferred substrate is DL-alanine. L-serine is a low-affinity substrate. This chain is DL-alanine permease SerP2, found in Lactococcus lactis subsp. cremoris (strain MG1363).